The chain runs to 252 residues: Triosephosphate isomerase (252 aa).

10–12 contributes to the substrate binding site; that stretch reads NWK. The active-site Electrophile is the His96. The active-site Proton acceptor is Glu168. Residues Gly174, Ser214, and 235 to 236 each bind substrate; that span reads GG.

Belongs to the triosephosphate isomerase family. Homodimer.

The protein localises to the cytoplasm. It catalyses the reaction D-glyceraldehyde 3-phosphate = dihydroxyacetone phosphate. It functions in the pathway carbohydrate biosynthesis; gluconeogenesis. It participates in carbohydrate degradation; glycolysis; D-glyceraldehyde 3-phosphate from glycerone phosphate: step 1/1. Its function is as follows. Involved in the gluconeogenesis. Catalyzes stereospecifically the conversion of dihydroxyacetone phosphate (DHAP) to D-glyceraldehyde-3-phosphate (G3P). This chain is Triosephosphate isomerase, found in Streptococcus pyogenes serotype M5 (strain Manfredo).